A 326-amino-acid chain; its full sequence is ATP-dependent 6-phosphofructokinase (326 aa).

Residue Gly14 coordinates ATP. An ADP-binding site is contributed by 24–28 (RAVVR). ATP is bound by residues 75–76 (RF) and 105–108 (GNGS). Asn106 is a binding site for Mg(2+). 129–131 (TID) contacts substrate. The active-site Proton acceptor is the Asp131. Arg158 serves as a coordination point for ADP. Substrate-binding positions include Arg166 and 173 to 175 (MGR). Residues 189–191 (GAE), Lys215, and 216–218 (KSA) each bind ADP. Substrate-binding positions include Glu225, Arg248, and 254–257 (HTQR).

The protein belongs to the phosphofructokinase type A (PFKA) family. ATP-dependent PFK group I subfamily. Prokaryotic clade 'B1' sub-subfamily. As to quaternary structure, homotetramer. Requires Mg(2+) as cofactor.

The protein localises to the cytoplasm. It carries out the reaction beta-D-fructose 6-phosphate + ATP = beta-D-fructose 1,6-bisphosphate + ADP + H(+). It functions in the pathway carbohydrate degradation; glycolysis; D-glyceraldehyde 3-phosphate and glycerone phosphate from D-glucose: step 3/4. With respect to regulation, allosterically activated by ADP and other diphosphonucleosides, and allosterically inhibited by phosphoenolpyruvate. In terms of biological role, catalyzes the phosphorylation of D-fructose 6-phosphate to fructose 1,6-bisphosphate by ATP, the first committing step of glycolysis. This chain is ATP-dependent 6-phosphofructokinase, found in Coxiella burnetii (strain RSA 493 / Nine Mile phase I).